The chain runs to 146 residues: Hemoglobin subunit beta (146 aa).

Val-1 is subject to N-acetylvaline. Positions 2-146 (HLTDAEKAAI…VASALAHKYH (145 aa)) constitute a Globin domain. His-63 serves as a coordination point for heme b. At Lys-82 the chain carries N6-acetyllysine. A heme b-binding site is contributed by His-92. Cys-93 carries the post-translational modification S-nitrosocysteine. At Lys-144 the chain carries N6-acetyllysine.

Belongs to the globin family. As to quaternary structure, heterotetramer of two alpha chains and two beta chains. Red blood cells.

Its function is as follows. Involved in oxygen transport from the lung to the various peripheral tissues. The protein is Hemoglobin subunit beta (HBB) of Microtus xanthognathus (Yellow-cheeked vole).